Here is a 365-residue protein sequence, read N- to C-terminus: MAENETPLTAVKVEALVVMKIMKHCSQTFPTTATGSIVGMDVGGTLEITNSFPFPVVEVPPESHFDNAAANPAAAAPRAKANTVYQAEMIRMLREVNVDANNVGWYTSANMGNFVNMNVIENQFFYQKEMNERTVALVHDVSRSSQGSLSLRAFRLSPKFMTAFKENKFTSEELQKSGLRYQDIFVELPVEIHNSHLITSFIHQLQTPNIPAPTELPSSLAALESGPFVKSSILAPNFDNLALSIDPFLEKNCDLLLDSIETHHTETNNFQYYQRSLAREQQRISAWQQKRKQENATRAALKQPLLPEDEWQRLFKLPQEPSRLESMLNSRQVDQYARQIDSFVSSTTGKMFAVKGNLLPGETAK.

Positions Val-11 to Phe-160 constitute an MPN domain.

This sequence belongs to the eIF-3 subunit H family. Component of the eukaryotic translation initiation factor 3 (eIF-3) complex.

It localises to the cytoplasm. In terms of biological role, component of the eukaryotic translation initiation factor 3 (eIF-3) complex, which is involved in protein synthesis of a specialized repertoire of mRNAs and, together with other initiation factors, stimulates binding of mRNA and methionyl-tRNAi to the 40S ribosome. The eIF-3 complex specifically targets and initiates translation of a subset of mRNAs involved in cell proliferation. The chain is Eukaryotic translation initiation factor 3 subunit H from Aspergillus fumigatus (strain CBS 144.89 / FGSC A1163 / CEA10) (Neosartorya fumigata).